The following is a 509-amino-acid chain: Lysophospholipid acyltransferase (509 aa).

The Lumenal portion of the chain corresponds to 1–14; sequence MAYLIDIPFEYFSS. Residues 15 to 35 traverse the membrane as a helical segment; it reads FLGVHPDQLKLLFCFLSAYPF. The Cytoplasmic portion of the chain corresponds to 36 to 55; that stretch reads AGILKRLPSAPWIRNLFSIS. Residues 56–76 form a helical membrane-spanning segment; sequence IGLFYLIGVHHLYDGVLVLLF. Topologically, residues 77–94 are lumenal; that stretch reads DALFTYFVAAFYRSSRMP. Residues 95 to 115 form a helical membrane-spanning segment; it reads WIIFIVILGHTFSSHVIRYIY. Over 116 to 223 the chain is Cytoplasmic; that stretch reads PSENTDITAS…LEPALGRCWR (108 aa). The chain crosses the membrane as a helical span at residues 224-244; it reads GLLWLILFITGSSIYPLKFLL. The Lumenal portion of the chain corresponds to 245 to 246; it reads TP. The helical transmembrane segment at 247–267 threads the bilayer; sequence KFASSPILLKYGYVCITAFVA. Topologically, residues 268 to 410 are cytoplasmic; sequence RMKYYGAWEL…TPGPFKRVYD (143 aa). Residue His363 is part of the active site. The chain crosses the membrane as a helical span at residues 411 to 431; that stretch reads VIGMVATNLSLSYLIISFLLL. Residues 432–441 are Lumenal-facing; the sequence is NLKESIHVWK. Residues 442–462 form a helical membrane-spanning segment; sequence ELYFIVHIYILIALAVFNSPI. Topologically, residues 463 to 509 are cytoplasmic; sequence RSKLDNKIRSRVNSYKLKSYEQSMKSTSDTDMLNMSVPKREDFENDE. The interval 488–509 is disordered; sequence STSDTDMLNMSVPKREDFENDE. Position 490 is a phosphoserine (Ser490). The segment covering 500 to 509 has biased composition (basic and acidic residues); the sequence is PKREDFENDE.

Belongs to the membrane-bound acyltransferase family.

The protein localises to the endoplasmic reticulum membrane. Its subcellular location is the microsome membrane. It catalyses the reaction a 1-acyl-sn-glycero-3-phosphate + an acyl-CoA = a 1,2-diacyl-sn-glycero-3-phosphate + CoA. The catalysed reaction is a 1-acyl-sn-glycero-3-phosphocholine + an acyl-CoA = a 1,2-diacyl-sn-glycero-3-phosphocholine + CoA. It carries out the reaction a 1-acyl-sn-glycero-3-phosphoethanolamine + an acyl-CoA = a 1,2-diacyl-sn-glycero-3-phosphoethanolamine + CoA. In terms of biological role, membrane-bound O-acyltransferase that mediates the incorporation of unsaturated acyl chains into the sn-2 position of phospholipids. The protein is Lysophospholipid acyltransferase (ale1) of Schizosaccharomyces pombe (strain 972 / ATCC 24843) (Fission yeast).